The chain runs to 787 residues: Patatin-like phospholipase domain-containing protein OOU_Y34scaffold00095g16.3 (787 aa).

Disordered regions lie at residues 47 to 69 and 137 to 164; these read APDT…ARSF and KVVG…PGRR. Residues 59–69 are compositionally biased toward low complexity; the sequence is ASPRSPSARSF. The span at 144 to 157 shows a compositional bias: basic residues; the sequence is HRQKKSSRRRKRSK. Residues 180–200 traverse the membrane as a helical segment; it reads WPFLLIVGAWIVGLAVTYLFT. A PNPLA domain is found at 375 to 566; that stretch reads LCLSGGASFA…RTDIPIRALN (192 aa). Residues 406 to 410 carry the GXSXG motif; it reads GTSGG. The Nucleophile role is filled by Ser-408. Residue Asp-553 is the Proton acceptor of the active site. Residues 745 to 787 form a disordered region; it reads GTDEEITTNDEMEFASDEKAVLTEDEGQFDGVTDNTEGSPLLK. Acidic residues predominate over residues 746 to 759; that stretch reads TDEEITTNDEMEFA. A compositionally biased stretch (polar residues) spans 777 to 787; that stretch reads TDNTEGSPLLK.

The protein belongs to the PLPL family.

The protein resides in the membrane. Functionally, probable lipid hydrolase. This chain is Patatin-like phospholipase domain-containing protein OOU_Y34scaffold00095g16.3, found in Pyricularia oryzae (strain Y34) (Rice blast fungus).